A 317-amino-acid chain; its full sequence is Hairy/enhancer-of-split related with YRPW motif protein 1 (317 aa).

Residues 1-59 (MKRNHDFSSSDSELDENIEVEKESADENAGANSPLGSMSPSTTSQVQARKRRRGIIEKR) are disordered. Positions 30-47 (GANSPLGSMSPSTTSQVQ) are enriched in polar residues. The region spanning 48-103 (ARKRRRGIIEKRRRDRINNSLSELRRLVPSAFEKQGSAKLEKAEILQMTVDHLKML) is the bHLH domain. The region spanning 121–157 (YRGLGFRECLAETARYLSIIEGLDNTDPLRIRLVSHL) is the Orange domain. 2 stretches are compositionally biased toward low complexity: residues 193 to 226 (QQQQ…SAPS) and 248 to 264 (PPST…TASK). The tract at residues 193–264 (QQQQQQGAPL…PGLTPPTASK (72 aa)) is disordered. Residues 307 to 310 (YRPW) carry the YRPW motif motif.

The protein belongs to the HEY family.

Its subcellular location is the nucleus. Transcriptional repressor which functions as a downstream effector of Notch signaling. In Danio rerio (Zebrafish), this protein is Hairy/enhancer-of-split related with YRPW motif protein 1 (hey1).